The chain runs to 156 residues: Large ribosomal subunit protein uL11 (156 aa).

The segment at 1-20 (MAQSVKTMVEGGKATTGPPI) is disordered.

Belongs to the universal ribosomal protein uL11 family. As to quaternary structure, part of the ribosomal stalk of the 50S ribosomal subunit. Interacts with L10 and the large rRNA to form the base of the stalk. L10 forms an elongated spine to which L12 dimers bind in a sequential fashion forming a multimeric L10(L12)X complex.

Functionally, forms part of the ribosomal stalk which helps the ribosome interact with GTP-bound translation factors. The polypeptide is Large ribosomal subunit protein uL11 (Thermoplasma acidophilum (strain ATCC 25905 / DSM 1728 / JCM 9062 / NBRC 15155 / AMRC-C165)).